We begin with the raw amino-acid sequence, 428 residues long: GTPase Obg (428 aa).

The region spanning 1–158 (MFVDQTKIDV…RTLRLELKVL (158 aa)) is the Obg domain. In terms of domain architecture, OBG-type G spans 159–328 (ADVGLVGFPS…LMGKTADLVE (170 aa)). Residues 165–172 (GFPSVGKS), 190–194 (FTTLT), 212–215 (DLPG), 282–285 (TQMD), and 309–311 (SSV) contribute to the GTP site. 2 residues coordinate Mg(2+): serine 172 and threonine 192. The region spanning 350 to 428 (YKKPEDDGFK…IADFTFEFVD (79 aa)) is the OCT domain.

It belongs to the TRAFAC class OBG-HflX-like GTPase superfamily. OBG GTPase family. Monomer. It depends on Mg(2+) as a cofactor.

The protein resides in the cytoplasm. An essential GTPase which binds GTP, GDP and possibly (p)ppGpp with moderate affinity, with high nucleotide exchange rates and a fairly low GTP hydrolysis rate. Plays a role in control of the cell cycle, stress response, ribosome biogenesis and in those bacteria that undergo differentiation, in morphogenesis control. The protein is GTPase Obg of Lactobacillus gasseri (strain ATCC 33323 / DSM 20243 / BCRC 14619 / CIP 102991 / JCM 1131 / KCTC 3163 / NCIMB 11718 / NCTC 13722 / AM63).